The following is a 199-amino-acid chain: 7-methyl-GTP pyrophosphatase (199 aa).

Asp-76 (proton acceptor) is an active-site residue.

Belongs to the Maf family. YceF subfamily. A divalent metal cation is required as a cofactor.

It localises to the cytoplasm. It catalyses the reaction N(7)-methyl-GTP + H2O = N(7)-methyl-GMP + diphosphate + H(+). In terms of biological role, nucleoside triphosphate pyrophosphatase that hydrolyzes 7-methyl-GTP (m(7)GTP). May have a dual role in cell division arrest and in preventing the incorporation of modified nucleotides into cellular nucleic acids. In Hahella chejuensis (strain KCTC 2396), this protein is 7-methyl-GTP pyrophosphatase.